A 145-amino-acid chain; its full sequence is Protein SprT-like (145 aa).

In terms of domain architecture, SprT-like spans 4–140 (TNYVQEVSLA…VCGNCHGKLI (137 aa)). Zn(2+) is bound at residue His64. Glu65 is a catalytic residue. Residue His68 coordinates Zn(2+).

This sequence belongs to the SprT family. Zn(2+) is required as a cofactor.

The protein resides in the cytoplasm. This is Protein SprT-like from Streptococcus pyogenes serotype M6 (strain ATCC BAA-946 / MGAS10394).